A 100-amino-acid chain; its full sequence is Large ribosomal subunit protein uL23 (100 aa).

This sequence belongs to the universal ribosomal protein uL23 family. In terms of assembly, part of the 50S ribosomal subunit. Contacts protein L29, and trigger factor when it is bound to the ribosome.

One of the early assembly proteins it binds 23S rRNA. One of the proteins that surrounds the polypeptide exit tunnel on the outside of the ribosome. Forms the main docking site for trigger factor binding to the ribosome. The chain is Large ribosomal subunit protein uL23 from Prochlorococcus marinus (strain MIT 9313).